The sequence spans 335 residues: UPF0284 protein TK0853 (335 aa).

It belongs to the UPF0284 family.

The chain is UPF0284 protein TK0853 from Thermococcus kodakarensis (strain ATCC BAA-918 / JCM 12380 / KOD1) (Pyrococcus kodakaraensis (strain KOD1)).